Here is a 149-residue protein sequence, read N- to C-terminus: Calmodulin (149 aa).

The residue at position 2 (Ala-2) is an N-acetylalanine. EF-hand domains lie at 8–43 (DQIS…LGQN), 44–79 (PTEA…KMKD), 81–116 (DSEE…LGEK), and 117–149 (LTDE…MMAK). Residues Asp-21, Asp-23, Asp-25, Cys-27, Glu-32, Asp-57, Asp-59, Asn-61, Thr-63, Glu-68, Asp-94, Asp-96, Asn-98, and Glu-105 each coordinate Ca(2+). An N6,N6,N6-trimethyllysine modification is found at Lys-116. Residues Asp-130, Asp-132, Asp-134, Gln-136, and Glu-141 each coordinate Ca(2+).

The protein belongs to the calmodulin family.

Calmodulin mediates the control of a large number of enzymes, ion channels and other proteins by Ca(2+). Among the enzymes to be stimulated by the calmodulin-Ca(2+) complex are a number of protein kinases and phosphatases. The protein is Calmodulin (CCM1) of Capsicum annuum (Capsicum pepper).